Here is a 180-residue protein sequence, read N- to C-terminus: Mitochondrial inner membrane protease subunit 2 (180 aa).

Residues 19–39 (LVGITLWVPVLMFVEQHVVSV) form a helical membrane-spanning segment. Residues S46 and K92 contribute to the active site.

It belongs to the peptidase S26 family. IMP2 subfamily. In terms of assembly, heterodimer of 2 subunits, imp1 and imp2.

Its subcellular location is the mitochondrion inner membrane. Functionally, catalyzes the removal of transit peptides required for the targeting of proteins from the mitochondrial matrix, across the inner membrane, into the inter-membrane space. This chain is Mitochondrial inner membrane protease subunit 2, found in Schizosaccharomyces pombe (strain 972 / ATCC 24843) (Fission yeast).